We begin with the raw amino-acid sequence, 443 residues long: Serine/threonine-protein phosphatase 2A 55 kDa regulatory subunit B beta isoform (443 aa).

WD repeat units lie at residues Thr-22–Val-61, Glu-87–Glu-128, Ala-171–Asn-209, and Glu-220–Arg-260. Ser-275 carries the post-translational modification Phosphoserine. 3 WD repeats span residues Glu-279–Glu-317, Glu-334–Leu-375, and Asp-410–Val-442. Tyr-295 is modified (phosphotyrosine). A Phosphothreonine modification is found at Thr-298.

This sequence belongs to the phosphatase 2A regulatory subunit B family. In terms of assembly, PP2A consists of a common heterodimeric core enzyme, composed of a 36 kDa catalytic subunit (subunit C) and a 65 kDa constant regulatory subunit (PR65 or subunit A), that associates with a variety of regulatory subunits. Proteins that associate with the core dimer include three families of regulatory subunits B (the R2/B/PR55/B55, R3/B''/PR72/PR130/PR59 and R5/B'/B56 families), the 48 kDa variable regulatory subunit, viral proteins, and cell signaling molecules. Interacts with TOMM22. Interacts with IER5 (via N- and C-terminal regions).

The protein resides in the cytoplasm. The protein localises to the cytoskeleton. It is found in the membrane. The B regulatory subunit might modulate substrate selectivity and catalytic activity, and might also direct the localization of the catalytic enzyme to a particular subcellular compartment. The chain is Serine/threonine-protein phosphatase 2A 55 kDa regulatory subunit B beta isoform (PPP2R2B) from Bos taurus (Bovine).